The chain runs to 219 residues: Elongation factor Ts, chloroplastic (219 aa).

The protein belongs to the EF-Ts family.

The protein resides in the plastid. It is found in the chloroplast. Functionally, associates with the EF-Tu.GDP complex and induces the exchange of GDP to GTP. It remains bound to the aminoacyl-tRNA.EF-Tu.GTP complex up to the GTP hydrolysis stage on the ribosome. The sequence is that of Elongation factor Ts, chloroplastic (tsf) from Guillardia theta (Cryptophyte).